The sequence spans 132 residues: Phosphoribosyl-AMP cyclohydrolase (132 aa).

Aspartate 89 provides a ligand contact to Mg(2+). Position 90 (cysteine 90) interacts with Zn(2+). The Mg(2+) site is built by aspartate 91 and aspartate 93. The Zn(2+) site is built by cysteine 106 and cysteine 113.

The protein belongs to the PRA-CH family. In terms of assembly, homodimer. It depends on Mg(2+) as a cofactor. Requires Zn(2+) as cofactor.

It localises to the cytoplasm. It catalyses the reaction 1-(5-phospho-beta-D-ribosyl)-5'-AMP + H2O = 1-(5-phospho-beta-D-ribosyl)-5-[(5-phospho-beta-D-ribosylamino)methylideneamino]imidazole-4-carboxamide. Its pathway is amino-acid biosynthesis; L-histidine biosynthesis; L-histidine from 5-phospho-alpha-D-ribose 1-diphosphate: step 3/9. Catalyzes the hydrolysis of the adenine ring of phosphoribosyl-AMP. The protein is Phosphoribosyl-AMP cyclohydrolase of Renibacterium salmoninarum (strain ATCC 33209 / DSM 20767 / JCM 11484 / NBRC 15589 / NCIMB 2235).